The sequence spans 74 residues: Ferredoxin MycCII (74 aa).

Residues 1–29 (MRIVLDAERCVGAGQCEATAPELFTQGDD) form the 4Fe-4S ferredoxin-type domain. The [3Fe-4S] cluster site is built by Cys10, Cys16, and Cys54.

The cofactor is [3Fe-4S] cluster.

The protein operates within antibiotic biosynthesis; mycinamicin biosynthesis. In terms of biological role, specific electron transport protein capable of effectively supporting cytochrome P450 MycCI activity in the biosynthesis of mycinamicin, a 16-membered macrolide antibiotic. The sequence is that of Ferredoxin MycCII from Micromonospora griseorubida.